Here is a 288-residue protein sequence, read N- to C-terminus: tRNA dimethylallyltransferase (288 aa).

2 to 9 contributes to the ATP binding site; sequence GPTAAGKS. 4–9 contributes to the substrate binding site; the sequence is TAAGKS. The segment at 27–30 is interaction with substrate tRNA; the sequence is DSMQ.

It belongs to the IPP transferase family. In terms of assembly, monomer. The cofactor is Mg(2+).

The catalysed reaction is adenosine(37) in tRNA + dimethylallyl diphosphate = N(6)-dimethylallyladenosine(37) in tRNA + diphosphate. In terms of biological role, catalyzes the transfer of a dimethylallyl group onto the adenine at position 37 in tRNAs that read codons beginning with uridine, leading to the formation of N6-(dimethylallyl)adenosine (i(6)A). The sequence is that of tRNA dimethylallyltransferase from Frankia alni (strain DSM 45986 / CECT 9034 / ACN14a).